Consider the following 238-residue polypeptide: Isoamyl acetate-hydrolyzing esterase (238 aa).

Ser12 functions as the Nucleophile in the catalytic mechanism. Asp187 (proton donor) is an active-site residue. His190 acts as the Proton acceptor in catalysis.

The protein belongs to the 'GDSL' lipolytic enzyme family. IAH1 subfamily. Homodimer.

It carries out the reaction 3-methylbutyl acetate + H2O = 3-methylbutanol + acetate + H(+). Functionally, plays a crucial role in the hydrolysis of isoamyl acetate in sake mash. Hydrolyzes short chain esters from acetate (C2) to hexanoate (C6), showing more specificity for shorter chain exters. No activity for decanoate (C10) esters. The polypeptide is Isoamyl acetate-hydrolyzing esterase (Saccharomyces cerevisiae (strain ATCC 204508 / S288c) (Baker's yeast)).